The chain runs to 194 residues: dCTP deaminase (194 aa).

DCTP is bound by residues 110 to 115, D128, 136 to 138, Y171, K178, and Q182; these read RSSLAR and VLE. The active-site Proton donor/acceptor is the E138. The interval 175 to 194 is disordered; the sequence is KDAKYKNQQSAVSSRINQDD. The span at 180–194 shows a compositional bias: polar residues; that stretch reads KNQQSAVSSRINQDD.

This sequence belongs to the dCTP deaminase family. As to quaternary structure, homotrimer.

It carries out the reaction dCTP + H2O + H(+) = dUTP + NH4(+). It functions in the pathway pyrimidine metabolism; dUMP biosynthesis; dUMP from dCTP (dUTP route): step 1/2. In terms of biological role, catalyzes the deamination of dCTP to dUTP. This is dCTP deaminase from Actinobacillus pleuropneumoniae serotype 5b (strain L20).